The chain runs to 803 residues: Zinc finger protein 226 (803 aa).

Residues 8–78 form the KRAB domain; it reads VTFKDVAVAF…TTATRRQGNL (71 aa). The C2H2-type 1; degenerate zinc finger occupies 252–274; the sequence is YQCNECKKPFSDLSSFDLHQQLQ. The segment at 280 to 302 adopts a C2H2-type 2; degenerate zinc-finger fold; that stretch reads LTCVERGKGFCYSPVLPVHQKVH. 17 C2H2-type zinc fingers span residues 307–329, 335–357, 363–385, 391–413, 419–441, 447–469, 475–497, 503–525, 531–553, 559–581, 587–609, 615–637, 643–665, 671–693, 699–721, 727–749, and 755–777; these read LKCDECGKEFSQGAHLQTHQKVH, YKCKQCGKGFSRRSALNVHCKVH, YNCEECGRAFSQASHLQDHQRLH, FKCDACGKSFSRNSHLQSHQRVH, YKCEECGKGFICSSNLYIHQRVH, YKCEECGKGFSRPSSLQAHQGVH, YICTVCGKGFTLSSNLQAHQRVH, YKCNECGKSFRRNSHYQVHLVVH, YKCEICGKGFSQSSYLQIHQKAH, FKCEECGQGFNQSSRLQIHQLIH, YKCEECGKGFSRRADLKIHCRIH, YNCEECGKVFRQASNLLAHQRVH, FKCEECGKSFGRSAHLQAHQKVH, YKCDECGKGFKWSLNLDMHQRVH, YKCGECGKYFSQASSLQLHQSVH, YKCDVCGKVFSRSSQLQSHQRVH, and YKCEICGKSFSWRSNLTVHHRIH. Residues 781 to 803 form a disordered region; the sequence is KSYKSNRGGKNIRESTQEKKSIK. Residues 791-803 show a composition bias toward basic and acidic residues; the sequence is NIRESTQEKKSIK.

It belongs to the krueppel C2H2-type zinc-finger protein family.

It localises to the nucleus. In terms of biological role, may be involved in transcriptional regulation. This chain is Zinc finger protein 226 (ZNF226), found in Homo sapiens (Human).